Consider the following 99-residue polypeptide: Bombyxin A-1 homolog (99 aa).

Residues 1–19 (MKTQVLFLVFALAAVMVSG) form the signal peptide. 3 disulfide bridges follow: Cys27/Cys86, Cys39/Cys99, and Cys85/Cys90. The propeptide at 48–76 (TPYISPENEGYGWRWLEPQRARQLDGARG) is c peptide like.

This sequence belongs to the insulin family. In terms of assembly, heterodimer of a B chain and an A chain linked by two disulfide bonds.

Its subcellular location is the secreted. Brain peptide responsible for activation of prothoracic glands to produce ecdysone in insects. This chain is Bombyxin A-1 homolog (SBXA1), found in Samia cynthia (Ailanthus silkmoth).